Reading from the N-terminus, the 355-residue chain is Probable GTP 3',8-cyclase (355 aa).

In terms of domain architecture, Radical SAM core spans 5–233; it reads AYGRPLKDLR…GRLHNRRVYR (229 aa). GTP is bound at residue Arg14. 3 residues coordinate [4Fe-4S] cluster: Cys21, Cys25, and Cys28. Position 69 (Lys69) interacts with GTP. Gly73 contributes to the S-adenosyl-L-methionine binding site. Thr97 contacts GTP. Position 121 (Ser121) interacts with S-adenosyl-L-methionine. Residue Lys157 participates in GTP binding. [4Fe-4S] cluster is bound by residues Cys252 and Cys255. 257–259 serves as a coordination point for GTP; it reads RVR. Cys269 is a binding site for [4Fe-4S] cluster.

It belongs to the radical SAM superfamily. MoaA family. [4Fe-4S] cluster serves as cofactor.

It catalyses the reaction GTP + AH2 + S-adenosyl-L-methionine = (8S)-3',8-cyclo-7,8-dihydroguanosine 5'-triphosphate + 5'-deoxyadenosine + L-methionine + A + H(+). It functions in the pathway cofactor biosynthesis; molybdopterin biosynthesis. Its function is as follows. Catalyzes the cyclization of GTP to (8S)-3',8-cyclo-7,8-dihydroguanosine 5'-triphosphate. The sequence is that of Probable GTP 3',8-cyclase from Aeropyrum pernix (strain ATCC 700893 / DSM 11879 / JCM 9820 / NBRC 100138 / K1).